The following is a 98-amino-acid chain: Integration host factor subunit beta (98 aa).

It belongs to the bacterial histone-like protein family. As to quaternary structure, heterodimer of an alpha and a beta chain.

In terms of biological role, this protein is one of the two subunits of integration host factor, a specific DNA-binding protein that functions in genetic recombination as well as in transcriptional and translational control. This chain is Integration host factor subunit beta, found in Gluconacetobacter diazotrophicus (strain ATCC 49037 / DSM 5601 / CCUG 37298 / CIP 103539 / LMG 7603 / PAl5).